Consider the following 130-residue polypeptide: Large ribosomal subunit protein bL12 (130 aa).

It belongs to the bacterial ribosomal protein bL12 family. In terms of assembly, homodimer. Part of the ribosomal stalk of the 50S ribosomal subunit. Forms a multimeric L10(L12)X complex, where L10 forms an elongated spine to which 2 to 4 L12 dimers bind in a sequential fashion. Binds GTP-bound translation factors.

Forms part of the ribosomal stalk which helps the ribosome interact with GTP-bound translation factors. Is thus essential for accurate translation. In Mycobacterium leprae (strain TN), this protein is Large ribosomal subunit protein bL12.